The sequence spans 351 residues: Peptide chain release factor 1 (351 aa).

Q229 is modified (N5-methylglutamine).

Belongs to the prokaryotic/mitochondrial release factor family. Post-translationally, methylated by PrmC. Methylation increases the termination efficiency of RF1.

The protein localises to the cytoplasm. Functionally, peptide chain release factor 1 directs the termination of translation in response to the peptide chain termination codons UAG and UAA. This Cereibacter sphaeroides (strain ATCC 17023 / DSM 158 / JCM 6121 / CCUG 31486 / LMG 2827 / NBRC 12203 / NCIMB 8253 / ATH 2.4.1.) (Rhodobacter sphaeroides) protein is Peptide chain release factor 1.